The primary structure comprises 222 residues: UPF0758 protein Mpe_A2695 (222 aa).

The region spanning 100-222 (VFDSPQAVKD…VVSFAERGLL (123 aa)) is the MPN domain. Zn(2+) is bound by residues histidine 171, histidine 173, and aspartate 184. Residues 171–184 (HNHPSGVAEPSRAD) carry the JAMM motif motif.

It belongs to the UPF0758 family.

The chain is UPF0758 protein Mpe_A2695 from Methylibium petroleiphilum (strain ATCC BAA-1232 / LMG 22953 / PM1).